We begin with the raw amino-acid sequence, 121 residues long: Basic phospholipase A2 caudoxin (121 aa).

Cystine bridges form between Cys25–Cys114, Cys27–Cys43, Cys42–Cys94, Cys48–Cys121, Cys49–Cys87, Cys56–Cys80, and Cys74–Cys85. Positions 26, 28, and 30 each coordinate Ca(2+). His46 is a catalytic residue. Asp47 contacts Ca(2+). Residue Asp88 is part of the active site.

Belongs to the phospholipase A2 family. Group II subfamily. D49 sub-subfamily. In terms of assembly, monomer. It depends on Ca(2+) as a cofactor. As to expression, expressed by the venom gland.

It is found in the secreted. The catalysed reaction is a 1,2-diacyl-sn-glycero-3-phosphocholine + H2O = a 1-acyl-sn-glycero-3-phosphocholine + a fatty acid + H(+). Snake venom phospholipase A2 (PLA2) that shows anticoagulant activity and presynaptic neurotoxicity. Acts as an anticoagulant toxin by inhibiting prothrombinase complex formation. Shows about 50% of the prothrombinase complex inhibition compared to CM-IV of N.nigricollis venom. Acts as a neurotoxin by inhibiting neuromuscular transmission by blocking acetylcholine release from the nerve termini. PLA2 catalyzes the calcium-dependent hydrolysis of the 2-acyl groups in 3-sn-phosphoglycerides. In Bitis caudalis (Horned adder), this protein is Basic phospholipase A2 caudoxin.